Consider the following 370-residue polypeptide: ABSCISIC ACID-INSENSITIVE 5-like protein 8 (370 aa).

Residues serine 25, serine 44, and serine 69 each carry the phosphoserine modification. Residues 56 to 77 are disordered; it reads SAEETQEGSQRQGSTTLPPTLS. Positions 62-77 are enriched in polar residues; sequence EGSQRQGSTTLPPTLS. Phosphothreonine is present on threonine 111. Polar residues predominate over residues 260 to 278; it reads ESSLLSPSPYISNGSTSTR. A disordered region spans residues 260-281; that stretch reads ESSLLSPSPYISNGSTSTRGGK. Positions 293–356 constitute a bZIP domain; it reads VDKKLRRKIK…MEPGMISLHE (64 aa). A basic motif region spans residues 295–314; that stretch reads KKLRRKIKNRESAARSRARK. The leucine-zipper stretch occupies residues 328 to 342; that stretch reads LKKDYEELLKQHVEL. The tract at residues 349–370 is disordered; that stretch reads PGMISLHERPERKLRRTKSDIK. The segment covering 354–370 has biased composition (basic and acidic residues); it reads LHERPERKLRRTKSDIK.

The protein belongs to the bZIP family. ABI5 subfamily. DNA-binding heterodimer.

It localises to the nucleus. In terms of biological role, could participate in abscisic acid-regulated gene expression. The sequence is that of ABSCISIC ACID-INSENSITIVE 5-like protein 8 (BZIP15) from Arabidopsis thaliana (Mouse-ear cress).